A 420-amino-acid polypeptide reads, in one-letter code: Glutamyl-tRNA reductase (420 aa).

Residues 49 to 52 (TCNR), Ser-107, 112 to 114 (EPQ), and Gln-118 each bind substrate. Cys-50 functions as the Nucleophile in the catalytic mechanism. An NADP(+)-binding site is contributed by 187–192 (GAGETI).

Belongs to the glutamyl-tRNA reductase family. Homodimer.

The enzyme catalyses (S)-4-amino-5-oxopentanoate + tRNA(Glu) + NADP(+) = L-glutamyl-tRNA(Glu) + NADPH + H(+). Its pathway is porphyrin-containing compound metabolism; protoporphyrin-IX biosynthesis; 5-aminolevulinate from L-glutamyl-tRNA(Glu): step 1/2. Catalyzes the NADPH-dependent reduction of glutamyl-tRNA(Glu) to glutamate 1-semialdehyde (GSA). The protein is Glutamyl-tRNA reductase of Photobacterium profundum (strain SS9).